A 483-amino-acid polypeptide reads, in one-letter code: MSKEDFVIKPEAAGASTDTSEWPLLLKNFDKLLVRSGHYTPIPAGSSPLKRDLKSYISSGVINLDKPSNPSSHEVVAWIKRILRCEKTGHSGTLDPKVTGCLIVCIDRATRLVKSQQGAGKEYVCIVRLHDALKDEKDLGRSLENLTGALFQRPPLISAVKRQLRVRTIYESNLIEFDNKRNLGVFWASCEAGTYMRTLCVHLGMLLGVGGHMQELRRVRSGALSENDNMVTLHDVMDAQWVYDNTRDESYLRSIIQPLETLLVGYKRIVVKDSAVNAVCYGAKLMIPGLLRYEEGIELYDEIVLITTKGEAIAVAIAQMSTVDLASCDHGVVASVKRCIMERDLYPRRWGLGPVAQKKKQMKADGKLDKYGRVNENTPEQWKKEYVPLDNAEQSTSSSQETKETEEEPKKAKEDSLIKEVETEKEEVKEDDSKKEKKEKKDKKEKKEKKEKKDKKEKKEKKEKKRKSEDGDSEEKKSKKSKK.

A Glycyl lysine isopeptide (Lys-Gly) (interchain with G-Cter in ubiquitin) cross-link involves residue Lys-9. At Ser-47 the chain carries Phosphoserine. The active-site Nucleophile is the Asp-95. In terms of domain architecture, PUA spans 266–341 (YKRIVVKDSA…VVASVKRCIM (76 aa)). A Glycyl lysine isopeptide (Lys-Gly) (interchain with G-Cter in ubiquitin) cross-link involves residue Lys-267. The segment at 357 to 483 (QKKKQMKADG…EEKKSKKSKK (127 aa)) is disordered. Residues 362–373 (MKADGKLDKYGR) are compositionally biased toward basic and acidic residues. A Phosphothreonine modification is found at Thr-378. Residues 408–436 (EPKKAKEDSLIKEVETEKEEVKEDDSKKE) are compositionally biased toward basic and acidic residues. 10 tandem repeats follow at residues 434–436 (KKE), 437–439 (KKE), 440–442 (KKD), 443–445 (KKE), 446–448 (KKE), 449–451 (KKE), 452–454 (KKD), 455–457 (KKE), 458–460 (KKE), and 461–463 (KKE). The segment at 434 to 463 (KKEKKEKKDKKEKKEKKEKKDKKEKKEKKE) is 10 X 3 AA tandem repeats of K-K-[DE]. Over residues 437 to 465 (KKEKKDKKEKKEKKEKKDKKEKKEKKEKK) the composition is skewed to basic residues. Residues 466–477 (RKSEDGDSEEKK) are compositionally biased toward basic and acidic residues.

The protein belongs to the pseudouridine synthase TruB family. Component of the small nucleolar ribonucleoprotein particles containing H/ACA-type snoRNAs (H/ACA snoRNPs). The protein component of the H/ACA snoRNP contains CBF5, GAR1, NHP2 and NOP10. The complex contains a stable core composed of CBF5 and NOP10, to which GAR1 and NHP2 subsequently bind. Also interacts with NAF1 and SHQ1, which may be required for assembly of H/ACA snoRNP complexes. May also associate with the CBF3 110 kDa subunit (CBF2). Interacts with the trimethylguanosine synthase (TGS1) and with NOP53.

It is found in the nucleus. Its subcellular location is the nucleolus. It localises to the chromosome. The protein localises to the centromere. The protein resides in the cytoplasm. It is found in the cytoskeleton. The enzyme catalyses uridine in 5S rRNA = pseudouridine in 5S rRNA. It catalyses the reaction uridine in snRNA = pseudouridine in snRNA. The catalysed reaction is a uridine in mRNA = a pseudouridine in mRNA. Functionally, catalytic subunit of H/ACA small nucleolar ribonucleoprotein (H/ACA snoRNP) complex, which catalyzes pseudouridylation of rRNA. This involves the isomerization of uridine such that the ribose is subsequently attached to C5, instead of the normal N1. Pseudouridine ('psi') residues may serve to stabilize the conformation of rRNAs and play a central role in ribosomal RNA processing. The H/ACA snoRNP complex also mediates pseudouridylation of other types of RNAs. Catalyzes pseudouridylation at position 93 in U2 snRNA. Also catalyzes pseudouridylation of mRNAs; H/ACA-type snoRNAs probably guide pseudouridylation of mRNAs. It is a centromeric DNA-CBF3-binding factor which is involved in mitotic chromosome segregation. Essential for cell growth. The chain is H/ACA ribonucleoprotein complex subunit CBF5 (CBF5) from Saccharomyces cerevisiae (strain ATCC 204508 / S288c) (Baker's yeast).